The following is a 61-amino-acid chain: Alpha-conotoxin-like Lp1.6a (61 aa).

Residues 1–21 form the signal peptide; the sequence is MGMRMMFIIFLFVVLATTVVS. The propeptide occupies 22–44; the sequence is FTSGRASDGRNAPANNKVSDLIR. A Pyrrolidone carboxylic acid modification is found at Gln-45. Cystine bridges form between Cys-47-Cys-53 and Cys-48-Cys-60. Cys-60 is subject to Cysteine amide.

The protein belongs to the conotoxin A superfamily. In terms of tissue distribution, expressed by the venom duct.

The protein localises to the secreted. Functionally, alpha-conotoxins act on postsynaptic membranes, they bind to the nicotinic acetylcholine receptors (nAChR) and thus inhibit them. The protein is Alpha-conotoxin-like Lp1.6a of Conus leopardus (Leopard cone).